The chain runs to 328 residues: Tetraacyldisaccharide 4'-kinase (328 aa).

55–62 (TAGGNGKT) is an ATP binding site.

This sequence belongs to the LpxK family.

It catalyses the reaction a lipid A disaccharide + ATP = a lipid IVA + ADP + H(+). It functions in the pathway glycolipid biosynthesis; lipid IV(A) biosynthesis; lipid IV(A) from (3R)-3-hydroxytetradecanoyl-[acyl-carrier-protein] and UDP-N-acetyl-alpha-D-glucosamine: step 6/6. Its function is as follows. Transfers the gamma-phosphate of ATP to the 4'-position of a tetraacyldisaccharide 1-phosphate intermediate (termed DS-1-P) to form tetraacyldisaccharide 1,4'-bis-phosphate (lipid IVA). This Escherichia coli O81 (strain ED1a) protein is Tetraacyldisaccharide 4'-kinase.